A 356-amino-acid polypeptide reads, in one-letter code: tRNA-specific 2-thiouridylase MnmA (356 aa).

ATP contacts are provided by residues 8 to 15 (GMSGGVDS) and Met34. Cys103 (nucleophile) is an active-site residue. The cysteines at positions 103 and 199 are disulfide-linked. Residue Gly127 participates in ATP binding. The interaction with tRNA stretch occupies residues 149-151 (KDQ). Cys199 (cysteine persulfide intermediate) is an active-site residue. Positions 305 to 306 (RY) are interaction with tRNA.

It belongs to the MnmA/TRMU family.

The protein localises to the cytoplasm. The enzyme catalyses S-sulfanyl-L-cysteinyl-[protein] + uridine(34) in tRNA + AH2 + ATP = 2-thiouridine(34) in tRNA + L-cysteinyl-[protein] + A + AMP + diphosphate + H(+). Catalyzes the 2-thiolation of uridine at the wobble position (U34) of tRNA, leading to the formation of s(2)U34. The polypeptide is tRNA-specific 2-thiouridylase MnmA (Clostridium kluyveri (strain ATCC 8527 / DSM 555 / NBRC 12016 / NCIMB 10680 / K1)).